Reading from the N-terminus, the 320-residue chain is 1-aminocyclopropane-1-carboxylate oxidase (320 aa).

Residues 154-254 (PTFGTKVSNY…RMSLASFYNP (101 aa)) enclose the Fe2OG dioxygenase domain. Residues His178, Asp180, and His235 each coordinate Fe cation.

This sequence belongs to the iron/ascorbate-dependent oxidoreductase family. Requires Fe cation as cofactor.

The catalysed reaction is 1-aminocyclopropane-1-carboxylate + L-ascorbate + O2 = ethene + L-dehydroascorbate + hydrogen cyanide + CO2 + 2 H2O. The protein operates within alkene biosynthesis; ethylene biosynthesis via S-adenosyl-L-methionine; ethylene from S-adenosyl-L-methionine: step 2/2. The protein is 1-aminocyclopropane-1-carboxylate oxidase (ACO) of Persea americana (Avocado).